A 448-amino-acid polypeptide reads, in one-letter code: Phosphoglucosamine mutase (448 aa).

The Phosphoserine intermediate role is filled by S108. Mg(2+)-binding residues include S108, D247, D249, and D251. Residue S108 is modified to Phosphoserine.

The protein belongs to the phosphohexose mutase family. Mg(2+) serves as cofactor. In terms of processing, activated by phosphorylation.

It catalyses the reaction alpha-D-glucosamine 1-phosphate = D-glucosamine 6-phosphate. In terms of biological role, catalyzes the conversion of glucosamine-6-phosphate to glucosamine-1-phosphate. The protein is Phosphoglucosamine mutase of Herminiimonas arsenicoxydans.